Reading from the N-terminus, the 565-residue chain is Proline--tRNA ligase (565 aa).

This sequence belongs to the class-II aminoacyl-tRNA synthetase family. ProS type 1 subfamily. Homodimer.

Its subcellular location is the cytoplasm. The catalysed reaction is tRNA(Pro) + L-proline + ATP = L-prolyl-tRNA(Pro) + AMP + diphosphate. Catalyzes the attachment of proline to tRNA(Pro) in a two-step reaction: proline is first activated by ATP to form Pro-AMP and then transferred to the acceptor end of tRNA(Pro). As ProRS can inadvertently accommodate and process non-cognate amino acids such as alanine and cysteine, to avoid such errors it has two additional distinct editing activities against alanine. One activity is designated as 'pretransfer' editing and involves the tRNA(Pro)-independent hydrolysis of activated Ala-AMP. The other activity is designated 'posttransfer' editing and involves deacylation of mischarged Ala-tRNA(Pro). The misacylated Cys-tRNA(Pro) is not edited by ProRS. In Francisella tularensis subsp. novicida (strain U112), this protein is Proline--tRNA ligase.